The primary structure comprises 319 residues: Acetyl-coenzyme A carboxylase carboxyl transferase subunit alpha (319 aa).

In terms of domain architecture, CoA carboxyltransferase C-terminal spans 35–296 (DLDKEIEQLE…KATLLRQLED (262 aa)).

The protein belongs to the AccA family. In terms of assembly, acetyl-CoA carboxylase is a heterohexamer composed of biotin carboxyl carrier protein (AccB), biotin carboxylase (AccC) and two subunits each of ACCase subunit alpha (AccA) and ACCase subunit beta (AccD).

The protein resides in the cytoplasm. It carries out the reaction N(6)-carboxybiotinyl-L-lysyl-[protein] + acetyl-CoA = N(6)-biotinyl-L-lysyl-[protein] + malonyl-CoA. It functions in the pathway lipid metabolism; malonyl-CoA biosynthesis; malonyl-CoA from acetyl-CoA: step 1/1. Component of the acetyl coenzyme A carboxylase (ACC) complex. First, biotin carboxylase catalyzes the carboxylation of biotin on its carrier protein (BCCP) and then the CO(2) group is transferred by the carboxyltransferase to acetyl-CoA to form malonyl-CoA. This is Acetyl-coenzyme A carboxylase carboxyl transferase subunit alpha from Vibrio parahaemolyticus serotype O3:K6 (strain RIMD 2210633).